Consider the following 106-residue polypeptide: ATP-dependent Clp protease adapter protein ClpS (106 aa).

The protein belongs to the ClpS family. In terms of assembly, binds to the N-terminal domain of the chaperone ClpA.

Functionally, involved in the modulation of the specificity of the ClpAP-mediated ATP-dependent protein degradation. In Vibrio parahaemolyticus serotype O3:K6 (strain RIMD 2210633), this protein is ATP-dependent Clp protease adapter protein ClpS.